The chain runs to 284 residues: Bifunctional protein FolD (284 aa).

NADP(+) is bound by residues 165–167 (GAS), isoleucine 190, and isoleucine 231.

It belongs to the tetrahydrofolate dehydrogenase/cyclohydrolase family. Homodimer.

It carries out the reaction (6R)-5,10-methylene-5,6,7,8-tetrahydrofolate + NADP(+) = (6R)-5,10-methenyltetrahydrofolate + NADPH. It catalyses the reaction (6R)-5,10-methenyltetrahydrofolate + H2O = (6R)-10-formyltetrahydrofolate + H(+). It functions in the pathway one-carbon metabolism; tetrahydrofolate interconversion. Its function is as follows. Catalyzes the oxidation of 5,10-methylenetetrahydrofolate to 5,10-methenyltetrahydrofolate and then the hydrolysis of 5,10-methenyltetrahydrofolate to 10-formyltetrahydrofolate. In Alkaliphilus metalliredigens (strain QYMF), this protein is Bifunctional protein FolD.